We begin with the raw amino-acid sequence, 87 residues long: uncharacterized protein (87 aa).

The helical transmembrane segment at 44–64 (DALYLAGSTIFTIVTTLVAWF) threads the bilayer.

The protein belongs to the SPP1 holin family.

The protein localises to the membrane. This is an uncharacterized protein from Bacillus licheniformis.